The sequence spans 421 residues: Medium-chain specific acyl-CoA dehydrogenase, mitochondrial (421 aa).

The transit peptide at methionine 1–threonine 25 directs the protein to the mitochondrion. N6-acetyllysine; alternate is present on lysine 69. Position 69 is an N6-succinyllysine; alternate (lysine 69). Lysine 79 carries the post-translational modification N6-acetyllysine. An FAD-binding site is contributed by tyrosine 158–serine 167. Position 167 (serine 167) interacts with octanoyl-CoA. Lysine 179 bears the N6-succinyllysine mark. An FAD-binding site is contributed by tryptophan 191 to threonine 193. Lysine 212 carries the N6-acetyllysine; alternate modification. Lysine 212 carries the post-translational modification N6-succinyllysine; alternate. Serine 216 is an octanoyl-CoA binding site. N6-acetyllysine; alternate is present on residues lysine 217, lysine 259, and lysine 271. 3 positions are modified to N6-succinyllysine; alternate: lysine 217, lysine 259, and lysine 271. Positions 278 and 281 each coordinate octanoyl-CoA. An N6-acetyllysine modification is found at lysine 301. FAD-binding positions include arginine 306–threonine 308 and histidine 316–glutamine 317. Residues arginine 349 and threonine 351 each coordinate octanoyl-CoA. Phosphothreonine is present on threonine 351. Glutamine 374–glycine 378 contributes to the FAD binding site. Glutamate 401 serves as a coordination point for octanoyl-CoA. Glutamate 401 acts as the Proton acceptor in catalysis. FAD is bound at residue glycine 402–glutamine 405.

It belongs to the acyl-CoA dehydrogenase family. Homotetramer. Interacts with the heterodimeric electron transfer flavoprotein ETF. It depends on FAD as a cofactor. Acetylated. Could occur at proximity of the cofactor-binding sites and reduce the catalytic activity. Could be deacetylated by SIRT3.

The protein resides in the mitochondrion matrix. It carries out the reaction a medium-chain 2,3-saturated fatty acyl-CoA + oxidized [electron-transfer flavoprotein] + H(+) = a medium-chain (2E)-enoyl-CoA + reduced [electron-transfer flavoprotein]. It catalyses the reaction pentanoyl-CoA + oxidized [electron-transfer flavoprotein] + H(+) = (2E)-pentenoyl-CoA + reduced [electron-transfer flavoprotein]. The enzyme catalyses hexanoyl-CoA + oxidized [electron-transfer flavoprotein] + H(+) = (2E)-hexenoyl-CoA + reduced [electron-transfer flavoprotein]. The catalysed reaction is octanoyl-CoA + oxidized [electron-transfer flavoprotein] + H(+) = (2E)-octenoyl-CoA + reduced [electron-transfer flavoprotein]. It carries out the reaction decanoyl-CoA + oxidized [electron-transfer flavoprotein] + H(+) = (2E)-decenoyl-CoA + reduced [electron-transfer flavoprotein]. It catalyses the reaction dodecanoyl-CoA + oxidized [electron-transfer flavoprotein] + H(+) = (2E)-dodecenoyl-CoA + reduced [electron-transfer flavoprotein]. The enzyme catalyses tetradecanoyl-CoA + oxidized [electron-transfer flavoprotein] + H(+) = (2E)-tetradecenoyl-CoA + reduced [electron-transfer flavoprotein]. The catalysed reaction is oxidized [electron-transfer flavoprotein] + hexadecanoyl-CoA + H(+) = (2E)-hexadecenoyl-CoA + reduced [electron-transfer flavoprotein]. Its pathway is lipid metabolism; mitochondrial fatty acid beta-oxidation. Its function is as follows. Medium-chain specific acyl-CoA dehydrogenase is one of the acyl-CoA dehydrogenases that catalyze the first step of mitochondrial fatty acid beta-oxidation, an aerobic process breaking down fatty acids into acetyl-CoA and allowing the production of energy from fats. The first step of fatty acid beta-oxidation consists in the removal of one hydrogen from C-2 and C-3 of the straight-chain fatty acyl-CoA thioester, resulting in the formation of trans-2-enoyl-CoA. Electron transfer flavoprotein (ETF) is the electron acceptor that transfers electrons to the main mitochondrial respiratory chain via ETF-ubiquinone oxidoreductase (ETF dehydrogenase). Among the different mitochondrial acyl-CoA dehydrogenases, medium-chain specific acyl-CoA dehydrogenase acts specifically on acyl-CoAs with saturated 6 to 12 carbons long primary chains. In Rattus norvegicus (Rat), this protein is Medium-chain specific acyl-CoA dehydrogenase, mitochondrial.